The sequence spans 255 residues: Putative cysteine-rich repeat secretory protein 32 (255 aa).

Residues 1–28 (MYSSYSLFKCLVCFYILGIQVLIHSVSS) form the signal peptide. 2 Gnk2-homologous domains span residues 35–136 (YLHH…TINS) and 143–252 (YENT…LYPF).

It belongs to the cysteine-rich repeat secretory protein family.

It is found in the secreted. This chain is Putative cysteine-rich repeat secretory protein 32 (CRRSP32), found in Arabidopsis thaliana (Mouse-ear cress).